Reading from the N-terminus, the 369-residue chain is 3-isopropylmalate dehydrogenase (369 aa).

G77–E90 is an NAD(+) binding site. Substrate is bound by residues R97, R107, R135, and D226. D226, D250, and D254 together coordinate Mg(2+). NAD(+) is bound at residue G289–N301.

This sequence belongs to the isocitrate and isopropylmalate dehydrogenases family. LeuB type 1 subfamily. As to quaternary structure, homodimer. Mg(2+) is required as a cofactor. The cofactor is Mn(2+).

Its subcellular location is the cytoplasm. It carries out the reaction (2R,3S)-3-isopropylmalate + NAD(+) = 4-methyl-2-oxopentanoate + CO2 + NADH. The protein operates within amino-acid biosynthesis; L-leucine biosynthesis; L-leucine from 3-methyl-2-oxobutanoate: step 3/4. Catalyzes the oxidation of 3-carboxy-2-hydroxy-4-methylpentanoate (3-isopropylmalate) to 3-carboxy-4-methyl-2-oxopentanoate. The product decarboxylates to 4-methyl-2 oxopentanoate. This chain is 3-isopropylmalate dehydrogenase, found in Cereibacter sphaeroides (strain ATCC 17023 / DSM 158 / JCM 6121 / CCUG 31486 / LMG 2827 / NBRC 12203 / NCIMB 8253 / ATH 2.4.1.) (Rhodobacter sphaeroides).